We begin with the raw amino-acid sequence, 308 residues long: Pseudouridine-5'-phosphate glycosidase (308 aa).

Residue Glu26 is the Proton donor of the active site. Substrate-binding residues include Lys87 and Val107. Asp139 serves as a coordination point for Mn(2+). 141 to 143 is a binding site for substrate; sequence SAD. Catalysis depends on Lys160, which acts as the Nucleophile.

This sequence belongs to the pseudouridine-5'-phosphate glycosidase family. In terms of assembly, homotrimer. Mn(2+) is required as a cofactor.

The enzyme catalyses D-ribose 5-phosphate + uracil = psi-UMP + H2O. Catalyzes the reversible cleavage of pseudouridine 5'-phosphate (PsiMP) to ribose 5-phosphate and uracil. Functions biologically in the cleavage direction, as part of a pseudouridine degradation pathway. The chain is Pseudouridine-5'-phosphate glycosidase from Legionella pneumophila subsp. pneumophila (strain Philadelphia 1 / ATCC 33152 / DSM 7513).